The sequence spans 337 residues: Mating-type protein MAT-2 (337 aa).

A DNA-binding region (HMG box) is located at residues 125–193 (APRPMNCWII…EHLRQHPNYK (69 aa)). Positions 171 to 219 (KRPWQDAAQSAKEEHLRQHPNYKYTPRKPGEKKKRQSRKSKRAAATTTA) are disordered. Positions 200–212 (GEKKKRQSRKSKR) are enriched in basic residues.

Its subcellular location is the nucleus. This chain is Mating-type protein MAT-2 (MAT2), found in Cochliobolus sativus (Common root rot and spot blotch fungus).